The following is a 297-amino-acid chain: UDP-3-O-acyl-N-acetylglucosamine deacetylase (297 aa).

Residues His79, His238, and Asp242 each contribute to the Zn(2+) site. His265 serves as the catalytic Proton donor.

It belongs to the LpxC family. Requires Zn(2+) as cofactor.

The catalysed reaction is a UDP-3-O-[(3R)-3-hydroxyacyl]-N-acetyl-alpha-D-glucosamine + H2O = a UDP-3-O-[(3R)-3-hydroxyacyl]-alpha-D-glucosamine + acetate. It functions in the pathway glycolipid biosynthesis; lipid IV(A) biosynthesis; lipid IV(A) from (3R)-3-hydroxytetradecanoyl-[acyl-carrier-protein] and UDP-N-acetyl-alpha-D-glucosamine: step 2/6. Its function is as follows. Catalyzes the hydrolysis of UDP-3-O-myristoyl-N-acetylglucosamine to form UDP-3-O-myristoylglucosamine and acetate, the committed step in lipid A biosynthesis. This is UDP-3-O-acyl-N-acetylglucosamine deacetylase from Blochmanniella pennsylvanica (strain BPEN).